The primary structure comprises 403 residues: Acetylornithine aminotransferase (403 aa).

Pyridoxal 5'-phosphate-binding positions include 107-108 (GA) and Phe-140. Arg-143 is a binding site for N(2)-acetyl-L-ornithine. 225–228 (DEVQ) lines the pyridoxal 5'-phosphate pocket. The residue at position 254 (Lys-254) is an N6-(pyridoxal phosphate)lysine. Ser-282 serves as a coordination point for N(2)-acetyl-L-ornithine. Position 283 (Thr-283) interacts with pyridoxal 5'-phosphate.

The protein belongs to the class-III pyridoxal-phosphate-dependent aminotransferase family. ArgD subfamily. Homodimer. Pyridoxal 5'-phosphate serves as cofactor.

It is found in the cytoplasm. It carries out the reaction N(2)-acetyl-L-ornithine + 2-oxoglutarate = N-acetyl-L-glutamate 5-semialdehyde + L-glutamate. It participates in amino-acid biosynthesis; L-arginine biosynthesis; N(2)-acetyl-L-ornithine from L-glutamate: step 4/4. The sequence is that of Acetylornithine aminotransferase from Vibrio vulnificus (strain YJ016).